The chain runs to 341 residues: Hygromycin-B 4-O-kinase (341 aa).

The active-site Proton acceptor is Asp198.

Belongs to the aminoglycoside phosphotransferase family.

The catalysed reaction is hygromycin B + ATP = 4-O-phosphohygromycin B + ADP + H(+). Its function is as follows. The aminoglycoside phosphotransferases achieve inactivation of their antibiotic substrates by phosphorylation. Only phosphorylates hygromycin and closely related compounds such as demethyl analogs and destomycin. The chain is Hygromycin-B 4-O-kinase (hph) from Escherichia coli.